The sequence spans 556 residues: 2-succinyl-5-enolpyruvyl-6-hydroxy-3-cyclohexene-1-carboxylate synthase (556 aa).

The protein belongs to the TPP enzyme family. MenD subfamily. In terms of assembly, homodimer. Requires Mg(2+) as cofactor. Mn(2+) is required as a cofactor. Thiamine diphosphate serves as cofactor.

The enzyme catalyses isochorismate + 2-oxoglutarate + H(+) = 5-enolpyruvoyl-6-hydroxy-2-succinyl-cyclohex-3-ene-1-carboxylate + CO2. Its pathway is quinol/quinone metabolism; 1,4-dihydroxy-2-naphthoate biosynthesis; 1,4-dihydroxy-2-naphthoate from chorismate: step 2/7. It functions in the pathway quinol/quinone metabolism; menaquinone biosynthesis. Functionally, catalyzes the thiamine diphosphate-dependent decarboxylation of 2-oxoglutarate and the subsequent addition of the resulting succinic semialdehyde-thiamine pyrophosphate anion to isochorismate to yield 2-succinyl-5-enolpyruvyl-6-hydroxy-3-cyclohexene-1-carboxylate (SEPHCHC). This Klebsiella pneumoniae subsp. pneumoniae (strain ATCC 700721 / MGH 78578) protein is 2-succinyl-5-enolpyruvyl-6-hydroxy-3-cyclohexene-1-carboxylate synthase.